Reading from the N-terminus, the 257-residue chain is Phosphate import ATP-binding protein PstB (257 aa).

Residues 4–246 enclose the ABC transporter domain; that stretch reads LKLNDVNIYY…KKIFENPDQK (243 aa). Position 36–43 (36–43) interacts with ATP; it reads GPSGCGKS.

It belongs to the ABC transporter superfamily. Phosphate importer (TC 3.A.1.7) family. The complex is composed of two ATP-binding proteins (PstB), two transmembrane proteins (PstC and PstA) and a solute-binding protein (PstS).

It localises to the cell membrane. It catalyses the reaction phosphate(out) + ATP + H2O = ADP + 2 phosphate(in) + H(+). Part of the ABC transporter complex PstSACB involved in phosphate import. Responsible for energy coupling to the transport system. In Corynebacterium glutamicum (strain ATCC 13032 / DSM 20300 / JCM 1318 / BCRC 11384 / CCUG 27702 / LMG 3730 / NBRC 12168 / NCIMB 10025 / NRRL B-2784 / 534), this protein is Phosphate import ATP-binding protein PstB.